The sequence spans 595 residues: Cyclin-dependent kinase-like 3 (595 aa).

One can recognise a Protein kinase domain in the interval 4–286 (YETLGKVGEG…STDLLRHDYF (283 aa)). Residues 10 to 18 (VGEGSYGTV) and K33 each bind ATP. The [NKR]KIAxRE motif lies at 45 to 51 (KIATREI). D125 functions as the Proton acceptor in the catalytic mechanism. At T158 the chain carries Phosphothreonine. Y160 bears the Phosphotyrosine mark. Disordered regions lie at residues 362–427 (VIKA…PHAG), 448–513 (SSNL…NKRK), and 551–586 (RESK…GKNL). The span at 368-386 (GKGDVPDQKKPEYEGDHRQ) shows a compositional bias: basic and acidic residues. Residues 387–397 (QGTADDTQPSS) are compositionally biased toward polar residues. Positions 448–457 (SSNLSHPNSR) are enriched in low complexity. 2 stretches are compositionally biased toward polar residues: residues 468 to 491 (SSQT…QVQT) and 499 to 509 (RTGQNDQISSG). The span at 570 to 585 (NQEKQEGGDGDCEGKN) shows a compositional bias: basic and acidic residues.

It belongs to the protein kinase superfamily. CMGC Ser/Thr protein kinase family. CDC2/CDKX subfamily.

Its subcellular location is the cytoplasm. It carries out the reaction L-seryl-[protein] + ATP = O-phospho-L-seryl-[protein] + ADP + H(+). The enzyme catalyses L-threonyl-[protein] + ATP = O-phospho-L-threonyl-[protein] + ADP + H(+). This Mus musculus (Mouse) protein is Cyclin-dependent kinase-like 3.